A 487-amino-acid polypeptide reads, in one-letter code: mRNA cleavage and polyadenylation factor CLP1 (487 aa).

ATP-binding positions include E19, K59, and 134–139; that span reads NSGKTT.

This sequence belongs to the Clp1 family. Clp1 subfamily. In terms of assembly, component of a pre-mRNA cleavage factor complex. Interacts directly with PCF11.

It localises to the nucleus. Its function is as follows. Required for endonucleolytic cleavage during polyadenylation-dependent pre-mRNA 3'-end formation. The protein is mRNA cleavage and polyadenylation factor CLP1 of Laccaria bicolor (strain S238N-H82 / ATCC MYA-4686) (Bicoloured deceiver).